The following is an 875-amino-acid chain: DNA topoisomerase 3-beta (875 aa).

The Toprim domain occupies 3-153; sequence SVLMVAEKPS…QVTYRAHFSA (151 aa). A Topo IA-type catalytic domain is found at 170–589; sequence NENEAKSVDA…AIKIFKLKFM (420 aa). Tyrosine 332 serves as the catalytic O-(5'-phospho-DNA)-tyrosine intermediate. Residues 371–391 are disordered; the sequence is QTPRKGKDAGDHPPITPMKLG.

This sequence belongs to the type IA topoisomerase family.

It catalyses the reaction ATP-independent breakage of single-stranded DNA, followed by passage and rejoining.. In terms of biological role, releases the supercoiling and torsional tension of DNA introduced during the DNA replication and transcription by transiently cleaving and rejoining one strand of the DNA duplex. Introduces a single-strand break via transesterification at a target site in duplex DNA. The scissile phosphodiester is attacked by the catalytic tyrosine of the enzyme, resulting in the formation of a DNA-(5'-phosphotyrosyl)-enzyme intermediate and the expulsion of a 3'-OH DNA strand. The free DNA strand than undergoes passage around the unbroken strand thus removing DNA supercoils. Finally, in the religation step, the DNA 3'-OH attacks the covalent intermediate to expel the active-site tyrosine and restore the DNA phosphodiester backbone. Weakly relaxes negative supercoils and displays a distinct preference for binding single-stranded DNA. The sequence is that of DNA topoisomerase 3-beta (Top3beta) from Drosophila melanogaster (Fruit fly).